The chain runs to 142 residues: Large ribosomal subunit protein uL11 (142 aa).

This sequence belongs to the universal ribosomal protein uL11 family. Part of the ribosomal stalk of the 50S ribosomal subunit. Interacts with L10 and the large rRNA to form the base of the stalk. L10 forms an elongated spine to which L12 dimers bind in a sequential fashion forming a multimeric L10(L12)X complex. In terms of processing, one or more lysine residues are methylated.

In terms of biological role, forms part of the ribosomal stalk which helps the ribosome interact with GTP-bound translation factors. The chain is Large ribosomal subunit protein uL11 from Glaesserella parasuis serovar 5 (strain SH0165) (Haemophilus parasuis).